The following is a 1287-amino-acid chain: MPTFLNGDITTPGHLVDPDPRESFADIPEVWDYPDFLDVQLKTFHDFVQDDVPPADREDVGLQAVFNEHFPIKDNRDRYTLEFVNYELDAPKHTVEECIAQGLTYSIPLKATLRLTSKEEEGGEEAIEAIEQEVYLGTLPFMTDRGTFIVNGAERVIVSQLHRSPGAFFEKEIHSNGTELFSARVIPFRGSWMEFSTDVRDVLWAYVDRKKKVPVTTLLRALGFSSDEEIVKMFDLADAVDIGDEDEFEEHLGRELATSVTIEKTIEIVDEDTGEVVDEEMEREVLLPAEHELEEGDWEELDEYDVSRLYLVREDVEDEALDKSTLVETLQKDSSHTEEEALEVIYEKLRGSEAPDLDSAREALERLFFNEDRYDLGDVGRHRMNARLDVDVDTDEKVLTKEDVVGIVRELIRLQNGESTADDIDHLSNRRVKSVGEQLGSQFSLGLARMARTIKERMNLRDADKFTPKDLVNARTIESVINTFFGTNQLSQFMDQTNALAEMTHKRRMSALGPGGLTRERAGFEVRDVHHTHYGRLCPIETPEGPNIGLMLSLCVHSTINDFGFLETPYRVVEDGRVTDRVEYLSAEEEDQATVAQANAPIGDDGHFERDEVRCRHQGDFPIVEPEEVDYMDVAPNQIVSPSASLVPFLSHNDANRALMGSNMQRQGVPLLRSDSPIVGTGLEGRVAKDSRSCVVAEGEGVVEYVDAERLVVRYDEEQDKTDLTFGEPVQEYELTKFRRTNQGTCMNQKPIVQAGDRVEEGEVLTDGFAMEKGELALGKNVLCAFMPWHGYNYEDAIVISERLVADDVYTSVHIEEFEHEVRDTKRGEEELTREIPNVSEEATKDLDERGIVRVGAEITPGDIIVGKITPKGETDPTPEEKLLRAIFGDKAGDVKDASLKAKPGMEGGVVIDTRLFSRRELDPASKKMEEKRLENIESDHERKLADLNERFWEKFFALVEDATSAGLEDREGEVLLTEGADFEEDAFDEVDPSDLSTRAEFTEDEELNDQISTLLRNYKSRRRDIEGTTKRQKHQVEMGDELPSGVVQMAKVYVARKKKIEVGDKMAGRHGNKGVIAKIAPVEDMPFLDDGTPVDLVLNPLGVPSRMNLGQIYETLLGWAGDRLGVKYATPIFDGASLEDVGDELEKAGLPRDGKVQLYDGRTGEPFDEKTTVGQIYMMKLEHLVEDKMHARSIGPYSLITQQPLGGKAQFGGQRLGEMEVWALYAYGASNTLQEMLTFKSDDVEGRSEAYESIVKGENLPSPGVPESFNVLVRELQGLGLEVTLD.

It belongs to the RNA polymerase beta chain family. The RNAP catalytic core consists of 2 alpha, 1 beta, 1 beta' and 1 omega subunit. When a sigma factor is associated with the core the holoenzyme is formed, which can initiate transcription.

The enzyme catalyses RNA(n) + a ribonucleoside 5'-triphosphate = RNA(n+1) + diphosphate. Functionally, DNA-dependent RNA polymerase catalyzes the transcription of DNA into RNA using the four ribonucleoside triphosphates as substrates. This Salinibacter ruber (strain DSM 13855 / M31) protein is DNA-directed RNA polymerase subunit beta.